The sequence spans 708 residues: ATP-dependent DNA helicase Hel308 (708 aa).

ATP-binding positions include glutamine 28 and 46–53; that span reads TATASGKS. Residues 33–198 form the Helicase ATP-binding domain; that stretch reads RAGIFDGRSV…WLGARLVESS (166 aa). A DEAH box motif is present at residues 143–146; that stretch reads DEIH. The Helicase C-terminal domain maps to 231 to 429; that stretch reads EVALAVDAVA…EPNLRAHVLG (199 aa).

The protein belongs to the helicase family. Hel308 subfamily. In terms of assembly, monomer.

It catalyses the reaction Couples ATP hydrolysis with the unwinding of duplex DNA by translocating in the 3'-5' direction.. The catalysed reaction is ATP + H2O = ADP + phosphate + H(+). In terms of biological role, DNA-dependent ATPase and 3'-5' DNA helicase that may be involved in repair of stalled replication forks. The sequence is that of ATP-dependent DNA helicase Hel308 from Pyrobaculum calidifontis (strain DSM 21063 / JCM 11548 / VA1).